The following is a 182-amino-acid chain: Lipoprotein signal peptidase (182 aa).

4 helical membrane passes run 15 to 35 (IYLG…FLVI), 44 to 64 (LEVF…FVFG), 65 to 85 (AFQD…VFLI), and 97 to 117 (PWGW…KFFV). Active-site residues include Asp-140 and Asp-162. Residues 155-175 (WPAFNVADSCVTIGLTILIFT) form a helical membrane-spanning segment.

It belongs to the peptidase A8 family.

The protein localises to the cell inner membrane. The enzyme catalyses Release of signal peptides from bacterial membrane prolipoproteins. Hydrolyzes -Xaa-Yaa-Zaa-|-(S,diacylglyceryl)Cys-, in which Xaa is hydrophobic (preferably Leu), and Yaa (Ala or Ser) and Zaa (Gly or Ala) have small, neutral side chains.. It participates in protein modification; lipoprotein biosynthesis (signal peptide cleavage). In terms of biological role, this protein specifically catalyzes the removal of signal peptides from prolipoproteins. The sequence is that of Lipoprotein signal peptidase from Leptospira interrogans serogroup Icterohaemorrhagiae serovar Lai (strain 56601).